We begin with the raw amino-acid sequence, 479 residues long: Proline--tRNA ligase (479 aa).

Belongs to the class-II aminoacyl-tRNA synthetase family. ProS type 3 subfamily. As to quaternary structure, homodimer.

The protein resides in the cytoplasm. It carries out the reaction tRNA(Pro) + L-proline + ATP = L-prolyl-tRNA(Pro) + AMP + diphosphate. Functionally, catalyzes the attachment of proline to tRNA(Pro) in a two-step reaction: proline is first activated by ATP to form Pro-AMP and then transferred to the acceptor end of tRNA(Pro). This chain is Proline--tRNA ligase, found in Lachnospira eligens (strain ATCC 27750 / DSM 3376 / VPI C15-48 / C15-B4) (Eubacterium eligens).